We begin with the raw amino-acid sequence, 764 residues long: 5-methyltetrahydropteroyltriglutamate--homocysteine methyltransferase (764 aa).

5-methyltetrahydropteroyltri-L-glutamate is bound by residues 16 to 19 (RELK) and Lys115. L-homocysteine-binding positions include 435-437 (IGS) and Glu488. L-methionine contacts are provided by residues 435–437 (IGS) and Glu488. 5-methyltetrahydropteroyltri-L-glutamate contacts are provided by residues 519–520 (RC) and Trp565. An L-homocysteine-binding site is contributed by Asp603. Position 603 (Asp603) interacts with L-methionine. Glu609 provides a ligand contact to 5-methyltetrahydropteroyltri-L-glutamate. Positions 645, 647, and 669 each coordinate Zn(2+). His698 acts as the Proton donor in catalysis. Cys730 serves as a coordination point for Zn(2+).

It belongs to the vitamin-B12 independent methionine synthase family. Zn(2+) is required as a cofactor.

It catalyses the reaction 5-methyltetrahydropteroyltri-L-glutamate + L-homocysteine = tetrahydropteroyltri-L-glutamate + L-methionine. It participates in amino-acid biosynthesis; L-methionine biosynthesis via de novo pathway; L-methionine from L-homocysteine (MetE route): step 1/1. Its function is as follows. Catalyzes the transfer of a methyl group from 5-methyltetrahydrofolate to homocysteine resulting in methionine formation. This is 5-methyltetrahydropteroyltriglutamate--homocysteine methyltransferase from Burkholderia mallei (strain NCTC 10247).